The chain runs to 341 residues: Phosphate acyltransferase (341 aa).

The protein belongs to the PlsX family. In terms of assembly, homodimer. Probably interacts with PlsY.

It localises to the cytoplasm. The enzyme catalyses a fatty acyl-[ACP] + phosphate = an acyl phosphate + holo-[ACP]. It participates in lipid metabolism; phospholipid metabolism. Its function is as follows. Catalyzes the reversible formation of acyl-phosphate (acyl-PO(4)) from acyl-[acyl-carrier-protein] (acyl-ACP). This enzyme utilizes acyl-ACP as fatty acyl donor, but not acyl-CoA. The sequence is that of Phosphate acyltransferase from Chlorobaculum parvum (strain DSM 263 / NCIMB 8327) (Chlorobium vibrioforme subsp. thiosulfatophilum).